A 118-amino-acid chain; its full sequence is Protein TusC (118 aa).

This sequence belongs to the DsrF/TusC family. In terms of assembly, heterohexamer, formed by a dimer of trimers. The hexameric TusBCD complex contains 2 copies each of TusB, TusC and TusD. The TusBCD complex interacts with TusE.

It localises to the cytoplasm. Part of a sulfur-relay system required for 2-thiolation of 5-methylaminomethyl-2-thiouridine (mnm(5)s(2)U) at tRNA wobble positions. In Salmonella paratyphi C (strain RKS4594), this protein is Protein TusC.